Reading from the N-terminus, the 953-residue chain is 26S proteasome non-ATPase regulatory subunit 1 (953 aa).

Met-1 is subject to N-acetylmethionine. Thr-273 is modified (phosphothreonine). The tract at residues Pro-279 to Pro-318 is disordered. At Ser-290 the chain carries Phosphoserine. A compositionally biased stretch (basic and acidic residues) spans Ser-290–Thr-303. Lys-310 is modified (N6-acetyllysine). A Phosphothreonine modification is found at Thr-311. Ser-315 carries the phosphoserine modification. 10 PC repeats span residues Thr-403–Ala-436, Gly-441–Arg-474, Gly-476–Glu-510, Ala-511–Leu-545, Gly-547–Arg-580, Ser-581–Arg-616, Ala-617–Arg-649, Gly-651–Gln-685, Gly-686–Ala-726, and Gly-729–Val-761. The residue at position 720 (Lys-720) is an N6-acetyllysine. Thr-830 carries the post-translational modification Phosphothreonine. Ser-834 carries the phosphoserine modification. 2 disordered regions span residues Ala-839–Pro-881 and Ala-930–Asp-953. Basic and acidic residues-rich tracts occupy residues Lys-842–Glu-852 and Ala-859–Glu-872. The segment covering Glu-936–Asp-953 has biased composition (acidic residues).

This sequence belongs to the proteasome subunit S1 family. As to quaternary structure, component of the 19S proteasome regulatory particle complex. The 26S proteasome consists of a 20S core particle (CP) and two 19S regulatory subunits (RP). The regulatory particle is made of a lid composed of 9 subunits, a base containing 6 ATPases and few additional components including PSMD1. Interacts with ADRM1. Interacts with ZFAND1.

In terms of biological role, component of the 26S proteasome, a multiprotein complex involved in the ATP-dependent degradation of ubiquitinated proteins. This complex plays a key role in the maintenance of protein homeostasis by removing misfolded or damaged proteins, which could impair cellular functions, and by removing proteins whose functions are no longer required. Therefore, the proteasome participates in numerous cellular processes, including cell cycle progression, apoptosis, or DNA damage repair. The sequence is that of 26S proteasome non-ATPase regulatory subunit 1 (PSMD1) from Homo sapiens (Human).